We begin with the raw amino-acid sequence, 274 residues long: Large ribosomal subunit protein uL2 (274 aa).

The tract at residues 223 to 256 is disordered; the sequence is VVMNPVDHPHGGGEGKTGEGRHPVDPWGNLTKGY. Positions 229–246 are enriched in basic and acidic residues; that stretch reads DHPHGGGEGKTGEGRHPV.

This sequence belongs to the universal ribosomal protein uL2 family. Part of the 50S ribosomal subunit. Forms a bridge to the 30S subunit in the 70S ribosome.

Its function is as follows. One of the primary rRNA binding proteins. Required for association of the 30S and 50S subunits to form the 70S ribosome, for tRNA binding and peptide bond formation. It has been suggested to have peptidyltransferase activity; this is somewhat controversial. Makes several contacts with the 16S rRNA in the 70S ribosome. In Variovorax paradoxus (strain S110), this protein is Large ribosomal subunit protein uL2.